The primary structure comprises 139 residues: Peptide methionine sulfoxide reductase MsrB (139 aa).

Positions 9–131 (TPSDNTEMTE…NSASLSFIDD (123 aa)) constitute a MsrB domain. Cys48, Cys51, Cys97, and Cys100 together coordinate Zn(2+). Cys120 functions as the Nucleophile in the catalytic mechanism.

It belongs to the MsrB Met sulfoxide reductase family. Requires Zn(2+) as cofactor.

The enzyme catalyses L-methionyl-[protein] + [thioredoxin]-disulfide + H2O = L-methionyl-(R)-S-oxide-[protein] + [thioredoxin]-dithiol. The sequence is that of Peptide methionine sulfoxide reductase MsrB from Pectobacterium atrosepticum (strain SCRI 1043 / ATCC BAA-672) (Erwinia carotovora subsp. atroseptica).